Reading from the N-terminus, the 570-residue chain is Coiled-coil domain-containing protein 22 homolog (570 aa).

2 disordered regions span residues 110–129 (RQSE…REQL) and 234–280 (LTST…PLEL). Residues 248–257 (TSPTQTSTTA) show a composition bias toward polar residues. Over residues 265-276 (SSEATATSTTTT) the composition is skewed to low complexity. Coiled-coil stretches lie at residues 308–471 (ELKI…LQRQ) and 529–570 (GEKL…ITVG).

It belongs to the CCDC22 family.

In Drosophila willistoni (Fruit fly), this protein is Coiled-coil domain-containing protein 22 homolog.